The chain runs to 316 residues: Lipoyl synthase (316 aa).

Positions 66, 71, 77, 92, 96, 99, and 306 each coordinate [4Fe-4S] cluster. The 218-residue stretch at 78-295 (YSQQTATFMV…ADIAKSMGFK (218 aa)) folds into the Radical SAM core domain.

This sequence belongs to the radical SAM superfamily. Lipoyl synthase family. It depends on [4Fe-4S] cluster as a cofactor.

Its subcellular location is the cytoplasm. The enzyme catalyses [[Fe-S] cluster scaffold protein carrying a second [4Fe-4S](2+) cluster] + N(6)-octanoyl-L-lysyl-[protein] + 2 oxidized [2Fe-2S]-[ferredoxin] + 2 S-adenosyl-L-methionine + 4 H(+) = [[Fe-S] cluster scaffold protein] + N(6)-[(R)-dihydrolipoyl]-L-lysyl-[protein] + 4 Fe(3+) + 2 hydrogen sulfide + 2 5'-deoxyadenosine + 2 L-methionine + 2 reduced [2Fe-2S]-[ferredoxin]. Its pathway is protein modification; protein lipoylation via endogenous pathway; protein N(6)-(lipoyl)lysine from octanoyl-[acyl-carrier-protein]: step 2/2. Functionally, catalyzes the radical-mediated insertion of two sulfur atoms into the C-6 and C-8 positions of the octanoyl moiety bound to the lipoyl domains of lipoate-dependent enzymes, thereby converting the octanoylated domains into lipoylated derivatives. In Rhodopirellula baltica (strain DSM 10527 / NCIMB 13988 / SH1), this protein is Lipoyl synthase.